We begin with the raw amino-acid sequence, 516 residues long: Threonine synthase 2, chloroplastic (516 aa).

A chloroplast-targeting transit peptide spans 1-33; the sequence is MASFSLPHSATYFPSHSETSLKPHSAASFTVRC. Polar residues predominate over residues 1 to 37; sequence MASFSLPHSATYFPSHSETSLKPHSAASFTVRCTSAS. Residues 1-55 are disordered; sequence MASFSLPHSATYFPSHSETSLKPHSAASFTVRCTSASPAVPPQTPQKPRRSPDEN. S-adenosyl-L-methionine is bound by residues 133–135, 156–158, N163, L164, K172, and N178; these read PYG and SAF. Residue K194 is modified to N6-(pyridoxal phosphate)lysine. Pyridoxal 5'-phosphate contacts are provided by residues 326-330 and T464; that span reads GNLGN.

It belongs to the threonine synthase family. In terms of assembly, homodimer. Requires pyridoxal 5'-phosphate as cofactor.

Its subcellular location is the plastid. It localises to the chloroplast. It catalyses the reaction O-phospho-L-homoserine + H2O = L-threonine + phosphate. It functions in the pathway amino-acid biosynthesis; L-threonine biosynthesis; L-threonine from L-aspartate: step 5/5. Allosterically activated by S-adenosyl-methionine (SAM). Catalyzes the gamma-elimination of phosphate from L-phosphohomoserine and the beta-addition of water to produce L-threonine. The protein is Threonine synthase 2, chloroplastic (TS2) of Arabidopsis thaliana (Mouse-ear cress).